We begin with the raw amino-acid sequence, 344 residues long: Palmitoyltransferase ZDHHC4 (344 aa).

The Lumenal portion of the chain corresponds to 1 to 2 (MD). A helical transmembrane segment spans residues 3 to 23 (FLVLFLFYLASVLMGLVLICV). Residues 24 to 67 (CSKTHSLKGLARGGAQIFSCIIPECLQRAVHGLLHYLFHTRNHT) lie on the Cytoplasmic side of the membrane. A helical membrane pass occupies residues 68 to 88 (FIVLHLVLQGMVYTEYTWEVF). Residues 89-99 (GYCQELELSLH) lie on the Lumenal side of the membrane. Residues 100–120 (YLLLPYLLLGVNLFFFTLTCG) traverse the membrane as a helical segment. Residues 121 to 192 (TNPGIITKAN…NNCIGAWNIR (72 aa)) lie on the Cytoplasmic side of the membrane. The DHHC domain occupies 149 to 199 (VRCSTCDLRKPARSKHCSVCNWCVHRFDHHCVWVNNCIGAWNIRYFLIYVL). Cys-179 acts as the S-palmitoyl cysteine intermediate in catalysis. The helical transmembrane segment at 193–213 (YFLIYVLTLTASAATVAIVST) threads the bilayer. At 214-255 (TFLVHLVVMSDLYQETYIDDLGHLHVMDTVFLIQYLFLTFPR) the chain is on the lumenal side. A helical transmembrane segment spans residues 256–276 (IVFMLGFVVVLSFLLGGYLLF). Residues 277–344 (VLYLAATNQT…FPCHERKKQE (68 aa)) are Cytoplasmic-facing. The short motif at 341–344 (KKQE) is the Di-lysine motif element.

It belongs to the DHHC palmitoyltransferase family. As to quaternary structure, interacts with CPT1A.

It is found in the endoplasmic reticulum membrane. Its subcellular location is the golgi apparatus membrane. The protein resides in the cell membrane. It carries out the reaction L-cysteinyl-[protein] + hexadecanoyl-CoA = S-hexadecanoyl-L-cysteinyl-[protein] + CoA. Functionally, palmitoyltransferase that catalyzes the addition of palmitate onto protein substrates including the D(2) dopamine receptor DRD2, GSK3B or MAVS. Mediates GSK3B palmitoylation to prevent its AKT1-mediated phosphorylation leading to activation of the STAT3 signaling pathway. Also catalyzes MAVS palmitoylation which promotes its stabilization and activation by inhibiting 'Lys-48'- but facilitating 'Lys-63'-linked ubiquitination. This Homo sapiens (Human) protein is Palmitoyltransferase ZDHHC4.